A 291-amino-acid chain; its full sequence is MHNLIFAILCSVAVSVLLKIARKKNIIIEQAIAFNYITAITFSYFLLKPDFKGLEFTDYIAQSENSPIFLALGLLLPSVFIIMSKAVEFAGIVRSDAAQRLSLFLPILAAFLIFHETLSQSKIIGVVLAFIGLFCLLTKPTQGQSAVNFKGVLGLIGVWFGYGIIDILFKQVAKSGGAFPATLFISFSLAACVMFIYLFLKRVQWTSSSVIGGIVLGVLNFFNILFYIKAHQSFAGNPTLVFAGMNIGVICLGTITGALVFKERISKLNWLGIIFSLSAIFCLYYLDKIIA.

The next 10 helical transmembrane spans lie at M1–A21, I26–L46, P67–V87, S95–H115, T117–L137, F149–F169, F179–F199, S208–I228, V241–F261, and W270–I290. The region spanning I107 to T138 is the EamA domain.

Its subcellular location is the cell membrane. This is an uncharacterized protein from Haemophilus influenzae (strain ATCC 51907 / DSM 11121 / KW20 / Rd).